The primary structure comprises 239 residues: Ribonuclease PH (239 aa).

Residues R86 and 124–126 (GTR) contribute to the phosphate site.

This sequence belongs to the RNase PH family. In terms of assembly, homohexameric ring arranged as a trimer of dimers.

The enzyme catalyses tRNA(n+1) + phosphate = tRNA(n) + a ribonucleoside 5'-diphosphate. Phosphorolytic 3'-5' exoribonuclease that plays an important role in tRNA 3'-end maturation. Removes nucleotide residues following the 3'-CCA terminus of tRNAs; can also add nucleotides to the ends of RNA molecules by using nucleoside diphosphates as substrates, but this may not be physiologically important. Probably plays a role in initiation of 16S rRNA degradation (leading to ribosome degradation) during starvation. The chain is Ribonuclease PH from Sinorhizobium fredii (strain NBRC 101917 / NGR234).